Here is a 674-residue protein sequence, read N- to C-terminus: Carcinine transporter (674 aa).

Topologically, residues 1–53 (MSDIEDNDGDEYDELSELRQRHKPESQPSVDEAFDLDDLLPTIGEFGKYQKLL) are cytoplasmic. A helical transmembrane segment spans residues 54–74 (VFGICLPACIPCGFCAFNQLF). Residues 75-178 (MADTPDDYWC…DLVCDQDIYP (104 aa)) are Extracellular-facing. N-linked (GlcNAc...) asparagine glycans are attached at residues asparagine 122, asparagine 141, and asparagine 156. A helical transmembrane segment spans residues 179 to 199 (TIGLAALNTGGPVGVYLFGLL). Topologically, residues 200-206 (NDRGGRR) are cytoplasmic. Residues 207–227 (LSYFVCLATLLAGSLMTSLSK) traverse the membrane as a helical segment. At 228–236 (DFWTWAGSR) the chain is on the extracellular side. The chain crosses the membrane as a helical span at residues 237–257 (VIVGLTIPAVYQIPFIISLEL). Over 258-264 (VGENYRS) the chain is Cytoplasmic. The helical transmembrane segment at 265–285 (FVTVMTCTFYTSGIMLLSGVT) threads the bilayer. Over 286 to 293 (YLERDWVR) the chain is Extracellular. A helical transmembrane segment spans residues 294–314 (LSYITSLPFYAYFLYMFVMPE). Residues 315-385 (SPRWLLMRGR…CRTPNMRLKT (71 aa)) are Cytoplasmic-facing. The chain crosses the membrane as a helical span at residues 386-406 (ILITLSWFANETVYLGLSYYG). Topologically, residues 407–414 (PALGTNQY) are extracellular. Residues 415–435 (VSFFLSAVVELPSYLCCWYFM) traverse the membrane as a helical segment. The Cytoplasmic segment spans residues 436-441 (DTWGRR). A helical membrane pass occupies residues 442–462 (WPLSLSMILGGVACVITVMLP). Residues 463 to 469 (DDAVDET) are Extracellular-facing. A helical membrane pass occupies residues 470-490 (LVLYLVSKALLSASFLIIYPF). Residues 491–500 (AGELYPTQVR) lie on the Cytoplasmic side of the membrane. Residues 501 to 521 (GIGIGASSYIGGLGLIGIPFI) traverse the membrane as a helical segment. At 522 to 527 (TYLGKD) the chain is on the extracellular side. Residues 528 to 548 (NLKLPLVIMGFLSMLGGMTGL) traverse the membrane as a helical segment. At 549–674 (RLPETLHHRL…DGTMQLTHWI (126 aa)) the chain is on the cytoplasmic side. The segment covering 614-631 (RDSRRVREPAPRIDERTP) has biased composition (basic and acidic residues). The tract at residues 614 to 647 (RDSRRVREPAPRIDERTPLDTTASGSGRPVHRPS) is disordered.

It belongs to the major facilitator (TC 2.A.1) superfamily. Organic cation transporter (TC 2.A.1.19) family. Expressed in photoreceptor cells.

The protein localises to the cell membrane. It is found in the cell projection. The protein resides in the axon. Functionally, carcinine transporter which is required for recycling of the neurotransmitter histamine in photoreceptor neurons of the compound eye. Following histamine release from photoreceptors and its uptake by glia where it is converted to carcinine, required for the uptake of carcinine from glia into photoreceptor cells where it can be hydrolyzed by tan to form histamine and beta-alanine. In Drosophila melanogaster (Fruit fly), this protein is Carcinine transporter.